Consider the following 357-residue polypeptide: Membrane-bound lytic murein transglycosylase C (357 aa).

The first 16 residues, 1–16, serve as a signal peptide directing secretion; it reads MKKLLALFVIAPILIS. Residue Cys17 is the site of N-palmitoyl cysteine attachment. Cys17 carries S-diacylglycerol cysteine lipidation.

This sequence belongs to the transglycosylase Slt family.

It localises to the cell outer membrane. It catalyses the reaction Exolytic cleavage of the (1-&gt;4)-beta-glycosidic linkage between N-acetylmuramic acid (MurNAc) and N-acetylglucosamine (GlcNAc) residues in peptidoglycan, from either the reducing or the non-reducing ends of the peptidoglycan chains, with concomitant formation of a 1,6-anhydrobond in the MurNAc residue.. Its function is as follows. Murein-degrading enzyme. May play a role in recycling of muropeptides during cell elongation and/or cell division. This is Membrane-bound lytic murein transglycosylase C from Photorhabdus laumondii subsp. laumondii (strain DSM 15139 / CIP 105565 / TT01) (Photorhabdus luminescens subsp. laumondii).